The sequence spans 460 residues: Carboxypeptidase DacB (460 aa).

An N-terminal signal peptide occupies residues methionine 1–alanine 28. Residues alanine 39 to proline 64 are disordered. Residue serine 113 is the Acyl-ester intermediate of the active site. Lysine 116 (proton acceptor) is an active-site residue. Serine 294 is an active-site residue.

The protein belongs to the peptidase S13 family.

In terms of biological role, carboxypeptidase that cleaves terminal D-alanine from peptidoglycan in the mycobacterial cell wall. May cleave L-Lys-D-Ala and/or D-Ala-D-Ala peptide bonds. Exerts important effects on mycobacterial cell morphology and cell division. The chain is Carboxypeptidase DacB from Mycolicibacterium smegmatis (strain ATCC 700084 / mc(2)155) (Mycobacterium smegmatis).